Here is a 352-residue protein sequence, read N- to C-terminus: Peptide chain release factor 1 (352 aa).

N5-methylglutamine is present on Gln-230.

Belongs to the prokaryotic/mitochondrial release factor family. Methylated by PrmC. Methylation increases the termination efficiency of RF1.

It localises to the cytoplasm. Its function is as follows. Peptide chain release factor 1 directs the termination of translation in response to the peptide chain termination codons UAG and UAA. This is Peptide chain release factor 1 from Exiguobacterium sibiricum (strain DSM 17290 / CCUG 55495 / CIP 109462 / JCM 13490 / 255-15).